The following is a 98-amino-acid chain: NADH-ubiquinone oxidoreductase chain 4L (98 aa).

The next 3 helical transmembrane spans lie at 1–21, 29–49, and 61–81; these read MSLT…GLLL, SLLC…MVIL, and IILL…LVMV.

The protein belongs to the complex I subunit 4L family. In terms of assembly, core subunit of respiratory chain NADH dehydrogenase (Complex I) which is composed of 45 different subunits.

It is found in the mitochondrion inner membrane. It catalyses the reaction a ubiquinone + NADH + 5 H(+)(in) = a ubiquinol + NAD(+) + 4 H(+)(out). Functionally, core subunit of the mitochondrial membrane respiratory chain NADH dehydrogenase (Complex I) which catalyzes electron transfer from NADH through the respiratory chain, using ubiquinone as an electron acceptor. Part of the enzyme membrane arm which is embedded in the lipid bilayer and involved in proton translocation. The polypeptide is NADH-ubiquinone oxidoreductase chain 4L (MT-ND4L) (Platyrrhinus helleri (Heller's broad-nosed bat)).